The following is an 884-amino-acid chain: Probable inorganic carbon transporter subunit DabA (884 aa).

Residues C390, D392, H582, and C597 each contribute to the Zn(2+) site.

The protein belongs to the inorganic carbon transporter (TC 9.A.2) DabA family. In terms of assembly, forms a complex with DabB. Requires Zn(2+) as cofactor.

It localises to the cell membrane. Its function is as follows. Part of an energy-coupled inorganic carbon pump. The protein is Probable inorganic carbon transporter subunit DabA of Staphylococcus saprophyticus subsp. saprophyticus (strain ATCC 15305 / DSM 20229 / NCIMB 8711 / NCTC 7292 / S-41).